Here is a 226-residue protein sequence, read N- to C-terminus: Clarin-3 (226 aa).

Residues 8–28 (LMFLSSFFTSLGSFIVICSIL) traverse the membrane as a helical segment. A glycan (N-linked (GlcNAc...) asparagine) is linked at Asn83. The next 3 membrane-spanning stretches (helical) occupy residues 92 to 112 (VTIL…GFTF), 129 to 149 (VYTW…LFVA), and 181 to 201 (FWLI…IIFY).

Belongs to the clarin family.

Its subcellular location is the membrane. The chain is Clarin-3 (CLRN3) from Homo sapiens (Human).